The chain runs to 397 residues: Succinate--CoA ligase [ADP-forming] subunit beta (397 aa).

The region spanning 9–254 (KALLAQYGAP…ETEEDPKELA (246 aa)) is the ATP-grasp domain. ATP contacts are provided by residues K46, 53–55 (GRG), E109, S112, and E117. 2 residues coordinate Mg(2+): N209 and D223. Residues N274 and 331–333 (GIM) contribute to the substrate site.

This sequence belongs to the succinate/malate CoA ligase beta subunit family. As to quaternary structure, heterotetramer of two alpha and two beta subunits. Mg(2+) is required as a cofactor.

The enzyme catalyses succinate + ATP + CoA = succinyl-CoA + ADP + phosphate. It catalyses the reaction GTP + succinate + CoA = succinyl-CoA + GDP + phosphate. It participates in carbohydrate metabolism; tricarboxylic acid cycle; succinate from succinyl-CoA (ligase route): step 1/1. Succinyl-CoA synthetase functions in the citric acid cycle (TCA), coupling the hydrolysis of succinyl-CoA to the synthesis of either ATP or GTP and thus represents the only step of substrate-level phosphorylation in the TCA. The beta subunit provides nucleotide specificity of the enzyme and binds the substrate succinate, while the binding sites for coenzyme A and phosphate are found in the alpha subunit. The polypeptide is Succinate--CoA ligase [ADP-forming] subunit beta (Jannaschia sp. (strain CCS1)).